Reading from the N-terminus, the 310-residue chain is E3 ubiquitin-protein ligase AIP2 (310 aa).

An RING-type; atypical zinc finger spans residues Cys-230 to Arg-271. Positions Thr-276 to Glu-306 form a coiled coil. The segment covering Lys-285–Ala-298 has biased composition (basic and acidic residues). The segment at Lys-285–Val-310 is disordered.

Interacts with ABI3 (via C-terminus). Auto-ubiquitinated. In terms of tissue distribution, highly expressed in leaves and at lower levels in flowers and seeds.

It is found in the nucleus. It localises to the cytoplasm. The catalysed reaction is S-ubiquitinyl-[E2 ubiquitin-conjugating enzyme]-L-cysteine + [acceptor protein]-L-lysine = [E2 ubiquitin-conjugating enzyme]-L-cysteine + N(6)-ubiquitinyl-[acceptor protein]-L-lysine.. Its pathway is protein modification; protein ubiquitination. E3 ubiquitin-protein ligase that acts as a negative regulator of abscisic acid (ABA) signaling. Mediates ubiquitination and subsequent proteasomal degradation of the transcription factor ABI3. The sequence is that of E3 ubiquitin-protein ligase AIP2 (AIP2) from Arabidopsis thaliana (Mouse-ear cress).